An 878-amino-acid chain; its full sequence is Probable outer membrane protein PmpI (878 aa).

The N-terminal stretch at 1–24 (MRPDHMNFCCLCAAILSSTAVLFG) is a signal peptide. Over residues 360–371 (SSKESPLPSSLQ) the composition is skewed to low complexity. Positions 360 to 381 (SSKESPLPSSLQASVTSPTPAT) are disordered. Positions 372–381 (ASVTSPTPAT) are enriched in polar residues. The region spanning 602–878 (GGAYLFGTWG…SLDLGTTYRF (277 aa)) is the Autotransporter domain.

Belongs to the PMP outer membrane protein family.

Its subcellular location is the secreted. The protein localises to the cell wall. It is found in the cell outer membrane. The protein is Probable outer membrane protein PmpI (pmpI) of Chlamydia trachomatis serovar D (strain ATCC VR-885 / DSM 19411 / UW-3/Cx).